Here is a 226-residue protein sequence, read N- to C-terminus: N-(5'-phosphoribosyl)anthranilate isomerase (226 aa).

The protein belongs to the TrpF family.

The enzyme catalyses N-(5-phospho-beta-D-ribosyl)anthranilate = 1-(2-carboxyphenylamino)-1-deoxy-D-ribulose 5-phosphate. The protein operates within amino-acid biosynthesis; L-tryptophan biosynthesis; L-tryptophan from chorismate: step 3/5. The polypeptide is N-(5'-phosphoribosyl)anthranilate isomerase (TRP1) (Saccharomyces kudriavzevii (strain ATCC MYA-4449 / AS 2.2408 / CBS 8840 / NBRC 1802 / NCYC 2889) (Yeast)).